Reading from the N-terminus, the 27-residue chain is Potassium channel toxin alpha-KTx 32.1 (27 aa).

2 disulfides stabilise this stretch: cysteine 5–cysteine 18 and cysteine 12–cysteine 25.

In terms of tissue distribution, expressed by the venom gland.

It localises to the secreted. In terms of biological role, blocker of voltage-gated potassium channels. Inhibits voltage-gated potassium channels Kv1.2/KCNA2 (Kd=0.96 nM) and Kv1.3/KCNA3 (Kd=1.3 nM). Does not inhibit Kv1.1/KCNA1, Kv1.5/KCNA5, Kv11.1/KCNH2/ERG1, KCa1.1/KCNMA1, KCa3.1/KCNN4, NaV1.5/SCN5A, NaV1.4/SCN4A or HV1/HVCN1. Strongly inhibits the expression of the activation markers interleukin-2 receptor and CD40 ligand/CD40LG in anti-CD3-activated CD4(+) TEM lymphocytes. The polypeptide is Potassium channel toxin alpha-KTx 32.1 (Centruroides margaritatus (Central American bark Scorpion)).